Here is a 114-residue protein sequence, read N- to C-terminus: Nucleoid-associated protein CKL_3826 (114 aa).

It belongs to the YbaB/EbfC family. As to quaternary structure, homodimer.

The protein resides in the cytoplasm. It localises to the nucleoid. Its function is as follows. Binds to DNA and alters its conformation. May be involved in regulation of gene expression, nucleoid organization and DNA protection. This Clostridium kluyveri (strain ATCC 8527 / DSM 555 / NBRC 12016 / NCIMB 10680 / K1) protein is Nucleoid-associated protein CKL_3826.